The primary structure comprises 205 residues: Urease accessory protein UreE (205 aa).

The segment at 171 to 205 is disordered; it reads AHEAHPHAHSHAGGHGHVHSGHGHGGKHGEHDAES. Residues 177–196 are compositionally biased toward basic residues; sequence HAHSHAGGHGHVHSGHGHGG.

It belongs to the UreE family.

It is found in the cytoplasm. In terms of biological role, involved in urease metallocenter assembly. Binds nickel. Probably functions as a nickel donor during metallocenter assembly. The chain is Urease accessory protein UreE from Bordetella parapertussis (strain 12822 / ATCC BAA-587 / NCTC 13253).